An 88-amino-acid chain; its full sequence is Protein LE25 (88 aa).

Residues 1-88 (MQTGKDAASA…YGATGNHTTF (88 aa)) are disordered. Positions 14-65 (GMEKTKANVQEKAERMTTRDPLKKEMATEKKEDRVAAAEMGKRDAKAQHAAE) are enriched in basic and acidic residues.

Belongs to the LEA type 1 family. In terms of tissue distribution, accumulates in developing seeds and drought-stressed leaves.

This Solanum lycopersicum (Tomato) protein is Protein LE25 (LE25).